Consider the following 469-residue polypeptide: Adenosylhomocysteinase (469 aa).

Thr63, Asp139, and Glu164 together coordinate substrate. Residue Thr165 to Thr167 participates in NAD(+) binding. Substrate is bound by residues Lys194 and Asp198. NAD(+)-binding positions include Asn199, Gly228 to Gly233, Glu251, Asn300, Ile321 to His323, and Asn375.

The protein belongs to the adenosylhomocysteinase family. NAD(+) serves as cofactor.

The protein localises to the cytoplasm. The catalysed reaction is S-adenosyl-L-homocysteine + H2O = L-homocysteine + adenosine. It participates in amino-acid biosynthesis; L-homocysteine biosynthesis; L-homocysteine from S-adenosyl-L-homocysteine: step 1/1. Functionally, may play a key role in the regulation of the intracellular concentration of adenosylhomocysteine. The polypeptide is Adenosylhomocysteinase (Pseudomonas syringae pv. tomato (strain ATCC BAA-871 / DC3000)).